The chain runs to 122 residues: Class I hydrophobin 2 (122 aa).

The N-terminal stretch at 1 to 22 (MFARVSTLFAMFFLGLALMVSA) is a signal peptide. 4 disulfide bridges follow: Cys-40/Cys-101, Cys-47/Cys-95, Cys-48/Cys-81, and Cys-102/Cys-115.

Belongs to the fungal hydrophobin family. In terms of assembly, self-assembles to form functional amyloid fibrils called rodlets. Self-assembly into fibrillar rodlets occurs spontaneously at hydrophobic:hydrophilic interfaces and the rodlets further associate laterally to form amphipathic monolayers.

It is found in the secreted. It localises to the cell wall. Aerial growth, conidiation, and dispersal of filamentous fungi in the environment rely upon a capability of their secreting small amphipathic proteins called hydrophobins (HPBs) with low sequence identity. Class I can self-assemble into an outermost layer of rodlet bundles on aerial cell surfaces, conferring cellular hydrophobicity that supports fungal growth, development and dispersal; whereas Class II form highly ordered films at water-air interfaces through intermolecular interactions but contribute nothing to the rodlet structure. Hah2 is a class I hydrophobin that is involved in aerial growth of mycelia, but does not play a role in pathogenesis. This is Class I hydrophobin 2 from Heterobasidion annosum (Root rot fungus).